Reading from the N-terminus, the 406-residue chain is Accessory Sec system protein translocase subunit SecY2 (406 aa).

The next 10 membrane-spanning stretches (helical) occupy residues 14 to 34 (SWTV…LPFI), 63 to 83 (FSLF…WQMF), 108 to 128 (FAIA…EVGI), 131 to 151 (GLAI…LVWL), 156 to 176 (SFFG…ANLP), 190 to 210 (LPII…AVIV), 246 to 266 (FMYA…IQIL), 285 to 305 (PIWL…FAFV), 344 to 364 (AVIG…IVLI), and 368 to 388 (YLQL…VYNV).

This sequence belongs to the SecY/SEC61-alpha family. SecY2 subfamily. Component of the accessory SecA2/SecY2 protein translocase complex required to export cell wall proteins. May form heterotrimers with SecE and SecG subunits.

It localises to the cell membrane. Part of the accessory SecA2/SecY2 system specifically required for export of possible cell wall proteins. The central subunit of a protein translocation channel. This chain is Accessory Sec system protein translocase subunit SecY2, found in Streptococcus salivarius (strain CCHSS3).